The following is a 231-amino-acid chain: NADH-ubiquinone oxidoreductase chain 4 (231 aa).

The next 7 helical transmembrane spans lie at 1–21 (PIAGSMVLAAILLKLGGYGII), 34–54 (MFLPFIVLALWGAILANLTCL), 63–85 (IAYSSISHMGLVVAAIIIQTPWG), 89–111 (AMALMIAHGFTSSALFCLANTTY), 128–148 (ILPMATTWWLLTNLMNIAIPP), 156–176 (LLIMSALFNWCPTTIIMLGLS), and 211–231 (LLMILHLIPLMMISMKPELII).

This sequence belongs to the complex I subunit 4 family.

It is found in the mitochondrion membrane. The enzyme catalyses a ubiquinone + NADH + 5 H(+)(in) = a ubiquinol + NAD(+) + 4 H(+)(out). In terms of biological role, core subunit of the mitochondrial membrane respiratory chain NADH dehydrogenase (Complex I) that is believed to belong to the minimal assembly required for catalysis. Complex I functions in the transfer of electrons from NADH to the respiratory chain. The immediate electron acceptor for the enzyme is believed to be ubiquinone. In Agkistrodon piscivorus piscivorus (Eastern cottonmouth), this protein is NADH-ubiquinone oxidoreductase chain 4 (MT-ND4).